The following is a 424-amino-acid chain: ATP-citrate synthase alpha chain protein 3 (424 aa).

Residues asparagine 343, threonine 345, and arginine 376 each coordinate citrate.

It belongs to the succinate/malate CoA ligase beta subunit family. In terms of assembly, heterooctamer of 4 alpha and 4 beta chains.

The protein localises to the cytoplasm. Its subcellular location is the cytosol. It catalyses the reaction oxaloacetate + acetyl-CoA + ADP + phosphate = citrate + ATP + CoA. In terms of biological role, ATP citrate-lyase is the primary enzyme responsible for the synthesis of cytosolic acetyl-CoA, used for the elongation of fatty acids and biosynthesis of isoprenoids, flavonoids and malonated derivatives. May supply substrate to the cytosolic acetyl-CoA carboxylase, which generates the malonyl-CoA used for the synthesis of a multitude of compounds, including very long chain fatty acids and flavonoids. Required for normal growth and development and elongation of C18 fatty acids to C20 to C24 fatty acids in seeds. In contrast to all known animal ACL enzymes having a homomeric structure, plant ACLs are composed of alpha and beta chains. This is ATP-citrate synthase alpha chain protein 3 (ACLA-3) from Arabidopsis thaliana (Mouse-ear cress).